Reading from the N-terminus, the 291-residue chain is 4-hydroxybenzoate octaprenyltransferase (291 aa).

A run of 8 helical transmembrane segments spans residues Pro-23–Gly-43, Pro-47–Ile-67, Leu-98–Leu-118, Phe-139–Tyr-159, Trp-171–Val-191, Ile-216–Leu-236, Ala-238–Leu-258, and Phe-267–Ala-287.

This sequence belongs to the UbiA prenyltransferase family. Mg(2+) serves as cofactor.

It localises to the cell inner membrane. The catalysed reaction is all-trans-octaprenyl diphosphate + 4-hydroxybenzoate = 4-hydroxy-3-(all-trans-octaprenyl)benzoate + diphosphate. It participates in cofactor biosynthesis; ubiquinone biosynthesis. Catalyzes the prenylation of para-hydroxybenzoate (PHB) with an all-trans polyprenyl group. Mediates the second step in the final reaction sequence of ubiquinone-8 (UQ-8) biosynthesis, which is the condensation of the polyisoprenoid side chain with PHB, generating the first membrane-bound Q intermediate 3-octaprenyl-4-hydroxybenzoate. This Ralstonia nicotianae (strain ATCC BAA-1114 / GMI1000) (Ralstonia solanacearum) protein is 4-hydroxybenzoate octaprenyltransferase.